Here is a 280-residue protein sequence, read N- to C-terminus: Cell division control protein 2 homolog B (280 aa).

ATP is bound by residues 1-5 (AYGVV) and Lys-20. The region spanning 1–274 (AYGVVYKARD…AKKALEHEYF (274 aa)) is the Protein kinase domain. The residue at position 2 (Tyr-2) is a Phosphotyrosine. Asp-114 (proton acceptor) is an active-site residue. Thr-148 carries the phosphothreonine; by CAK modification.

This sequence belongs to the protein kinase superfamily. CMGC Ser/Thr protein kinase family. CDC2/CDKX subfamily.

It catalyses the reaction L-seryl-[protein] + ATP = O-phospho-L-seryl-[protein] + ADP + H(+). The catalysed reaction is L-threonyl-[protein] + ATP = O-phospho-L-threonyl-[protein] + ADP + H(+). The enzyme catalyses [DNA-directed RNA polymerase] + ATP = phospho-[DNA-directed RNA polymerase] + ADP + H(+). Its activity is regulated as follows. Phosphorylation at Tyr-2 inactivates the enzyme, while phosphorylation at Thr-148 activates it. Functionally, plays a key role in the control of the eukaryotic cell cycle. This is Cell division control protein 2 homolog B (CDC2B) from Antirrhinum majus (Garden snapdragon).